A 293-amino-acid polypeptide reads, in one-letter code: Glycine--tRNA ligase alpha subunit (293 aa).

This sequence belongs to the class-II aminoacyl-tRNA synthetase family. Tetramer of two alpha and two beta subunits.

The protein resides in the cytoplasm. The catalysed reaction is tRNA(Gly) + glycine + ATP = glycyl-tRNA(Gly) + AMP + diphosphate. This Aliarcobacter butzleri (strain RM4018) (Arcobacter butzleri) protein is Glycine--tRNA ligase alpha subunit.